The chain runs to 296 residues: Aspartate carbamoyltransferase catalytic subunit (296 aa).

The carbamoyl phosphate site is built by Arg-50 and Thr-51. An L-aspartate-binding site is contributed by Lys-79. Carbamoyl phosphate contacts are provided by Arg-100, His-128, and Gln-131. L-aspartate is bound by residues Arg-161 and Arg-219. Residues Leu-258 and Pro-259 each coordinate carbamoyl phosphate.

This sequence belongs to the aspartate/ornithine carbamoyltransferase superfamily. ATCase family. As to quaternary structure, heterooligomer of catalytic and regulatory chains.

The catalysed reaction is carbamoyl phosphate + L-aspartate = N-carbamoyl-L-aspartate + phosphate + H(+). It participates in pyrimidine metabolism; UMP biosynthesis via de novo pathway; (S)-dihydroorotate from bicarbonate: step 2/3. Its function is as follows. Catalyzes the condensation of carbamoyl phosphate and aspartate to form carbamoyl aspartate and inorganic phosphate, the committed step in the de novo pyrimidine nucleotide biosynthesis pathway. In Korarchaeum cryptofilum (strain OPF8), this protein is Aspartate carbamoyltransferase catalytic subunit.